Reading from the N-terminus, the 190-residue chain is UPF0301 protein Psyr_0485 (190 aa).

It belongs to the UPF0301 (AlgH) family.

The chain is UPF0301 protein Psyr_0485 from Pseudomonas syringae pv. syringae (strain B728a).